We begin with the raw amino-acid sequence, 107 residues long: UPF0145 protein YbjQ (107 aa).

This sequence belongs to the UPF0145 family.

The chain is UPF0145 protein YbjQ from Escherichia coli O139:H28 (strain E24377A / ETEC).